The chain runs to 379 residues: Elongation factor Ts, mitochondrial (379 aa).

The N-terminal 33 residues, 1–33, are a transit peptide targeting the mitochondrion; the sequence is MAWGQGAKRSILGLLFRSQHQTARAYSSSAFQT.

It belongs to the EF-Ts family.

It is found in the mitochondrion. In terms of biological role, associates with the EF-Tu.GDP complex and induces the exchange of GDP to GTP. It remains bound to the aminoacyl-tRNA.EF-Tu.GTP complex up to the GTP hydrolysis stage on the ribosome. The sequence is that of Elongation factor Ts, mitochondrial from Zea mays (Maize).